The sequence spans 132 residues: Large ribosomal subunit protein uL14 (132 aa).

The protein belongs to the universal ribosomal protein uL14 family. Part of the 50S ribosomal subunit. Forms a cluster with proteins L3 and L24e, part of which may contact the 16S rRNA in 2 intersubunit bridges.

Binds to 23S rRNA. Forms part of two intersubunit bridges in the 70S ribosome. This Methanoregula boonei (strain DSM 21154 / JCM 14090 / 6A8) protein is Large ribosomal subunit protein uL14.